The primary structure comprises 105 residues: Pyruvate synthase subunit PorD (105 aa).

4Fe-4S ferredoxin-type domains lie at 44–73 and 74–103; these read FKPE…LDEE and GYPV…MVRE. The [4Fe-4S] cluster site is built by Cys-53, Cys-56, Cys-59, Cys-63, Cys-83, Cys-86, Cys-89, and Cys-93.

Heterotetramer of one alpha, one beta, one delta and one gamma chain. [4Fe-4S] cluster is required as a cofactor.

The polypeptide is Pyruvate synthase subunit PorD (porD) (Pyrococcus furiosus (strain ATCC 43587 / DSM 3638 / JCM 8422 / Vc1)).